A 97-amino-acid chain; its full sequence is Large ribosomal subunit protein uL23 (97 aa).

This sequence belongs to the universal ribosomal protein uL23 family. As to quaternary structure, part of the 50S ribosomal subunit. Contacts protein L29, and trigger factor when it is bound to the ribosome.

One of the early assembly proteins it binds 23S rRNA. One of the proteins that surrounds the polypeptide exit tunnel on the outside of the ribosome. Forms the main docking site for trigger factor binding to the ribosome. The chain is Large ribosomal subunit protein uL23 from Mesorhizobium japonicum (strain LMG 29417 / CECT 9101 / MAFF 303099) (Mesorhizobium loti (strain MAFF 303099)).